A 587-amino-acid chain; its full sequence is 5-aminolevulinate synthase, erythroid-specific, mitochondrial (587 aa).

Residues 1 to 49 (MVTAAMLLQCCPVPARGPTSLLGKVVKTHQFLFGIGRCPILATQGPNCS) constitute a mitochondrion transit peptide. Arginine 163 is a binding site for succinyl-CoA. Cysteine 258 and phenylalanine 259 together coordinate pyridoxal 5'-phosphate. Succinyl-CoA contacts are provided by serine 280 and lysine 299. Pyridoxal 5'-phosphate contacts are provided by serine 332, histidine 360, and threonine 388. The active site involves lysine 391. At lysine 391 the chain carries N6-(pyridoxal phosphate)lysine. Threonine 420 and threonine 421 together coordinate pyridoxal 5'-phosphate. A succinyl-CoA-binding site is contributed by threonine 508.

This sequence belongs to the class-II pyridoxal-phosphate-dependent aminotransferase family. In terms of assembly, homodimer. Interacts with SUCLA2. Pyridoxal 5'-phosphate is required as a cofactor.

Its subcellular location is the mitochondrion inner membrane. It carries out the reaction succinyl-CoA + glycine + H(+) = 5-aminolevulinate + CO2 + CoA. Its pathway is porphyrin-containing compound metabolism; protoporphyrin-IX biosynthesis; 5-aminolevulinate from glycine: step 1/1. In terms of biological role, catalyzes the pyridoxal 5'-phosphate (PLP)-dependent condensation of succinyl-CoA and glycine to form aminolevulinic acid (ALA), with CoA and CO2 as by-products. Contributes significantly to heme formation during erythropoiesis. This Pongo abelii (Sumatran orangutan) protein is 5-aminolevulinate synthase, erythroid-specific, mitochondrial (ALAS2).